The chain runs to 437 residues: Eukaryotic peptide chain release factor subunit 1 (437 aa).

Alanine 2 bears the N-acetylalanine mark. Residues 61–64 carry the NIKS motif; plays an important role in translational termination motif; the sequence is NIKS. 4-hydroxylysine is present on lysine 63. Residue lysine 87 forms a Glycyl lysine isopeptide (Lys-Gly) (interchain with G-Cter in SUMO2) linkage. Glutamine 185 is modified (N5-methylglutamine). The residue at position 347 (threonine 347) is a Phosphothreonine. A Glycyl lysine isopeptide (Lys-Gly) (interchain with G-Cter in SUMO2) cross-link involves residue lysine 404.

Belongs to the eukaryotic release factor 1 family. Component of the eRF1-eRF3-GTP ternary complex, composed of ETF1/ERF1 and eRF3 (GSPT1/ERF3A or GSPT2/ERF3B) and GTP. Component of the transient SURF (SMG1-UPF1-eRF1-eRF3) complex. Interacts with JMJD4. The ETF1-GSPT1 complex interacts with JMJD4. Post-translationally, hydroxylation at Lys-63 by JMJD4 promotes its translational termination efficiency. In terms of processing, methylated at Gln-185 by N6AMT1. Ubiquitinated via 'Lys-6'-linked polyubiquitin chains by RNF14 and RNF25 in response to ribosome collisions (ribosome stalling), leading to its degradation by the proteasome and rescue of stalled ribosomes.

The protein localises to the cytoplasm. Its function is as follows. Component of the eRF1-eRF3-GTP ternary complex, a ternary complex that mediates translation termination in response to the termination codons. The eRF1-eRF3-GTP complex binds to a stop codon in the ribosomal A-site. ETF1/ERF1 is responsible for stop codon recognition and inducing hydrolysis of peptidyl-tRNA. Following GTP hydrolysis, eRF3 (GSPT1/ERF3A or GSPT2/ERF3B) dissociates, permitting ETF1/eRF1 to accommodate fully in the A-site, followed by hydrolysis of peptidyl-tRNA. Component of the transient SURF complex which recruits UPF1 to stalled ribosomes in the context of nonsense-mediated decay (NMD) of mRNAs containing premature stop codons. Required for SHFL-mediated translation termination which inhibits programmed ribosomal frameshifting (-1PRF) of mRNA from viruses and cellular genes. This is Eukaryotic peptide chain release factor subunit 1 (ETF1) from Pongo abelii (Sumatran orangutan).